The chain runs to 356 residues: Outer membrane protein Omp38 (356 aa).

A signal peptide spans Met1–Ala19. One can recognise an OmpA-like domain in the interval Glu221–Arg339. Positions 237, 271, 273, 279, and 286 each coordinate meso-2,6-diaminopimelate.

This sequence belongs to the outer membrane OOP (TC 1.B.6) superfamily. As to quaternary structure, homotrimer. Forms a pore with a size of 1.3 nm.

The protein localises to the cell outer membrane. Its subcellular location is the host mitochondrion. Functionally, functions as a porin. Induces apoptosis in human cell lines through caspase-dependent and AIF-dependent pathways. Purified Omp38 enters host cell and localizes to the mitochondria, which presumably leads to a release of proapoptotic molecules such as cytochrome c and AIF (apoptosis-inducing factor). Binds peptidoglycan, contributes to cell wall maintenance. The chain is Outer membrane protein Omp38 from Acinetobacter baumannii (strain ATCC 19606 / DSM 30007 / JCM 6841 / CCUG 19606 / CIP 70.34 / NBRC 109757 / NCIMB 12457 / NCTC 12156 / 81).